Here is a 472-residue protein sequence, read N- to C-terminus: Carboxypeptidase Q (472 aa).

The first 20 residues, 1-20, serve as a signal peptide directing secretion; that stretch reads MRFLFFLFVAVVHLFSLGSG. A propeptide spanning residues 21 to 44 is cleaved from the precursor; the sequence is KAIYKSGVSQRTFQEIKEEIANYE. N61 carries an N-linked (GlcNAc...) asparagine glycan. H290 and D302 together coordinate Zn(2+). E336 serves as the catalytic Nucleophile. E337 serves as a coordination point for Zn(2+). N353 is a glycosylation site (N-linked (GlcNAc...) asparagine). Residue D364 coordinates Zn(2+). N-linked (GlcNAc...) asparagine glycosylation is present at N396. H434 is a Zn(2+) binding site.

The protein belongs to the peptidase M28 family. In terms of assembly, homodimer. The monomeric form is inactive while the homodimer is active. In terms of processing, N-glycosylated. The secreted form is modified by hybrid or complex type oligosaccharide chains.

Its subcellular location is the endoplasmic reticulum. It localises to the golgi apparatus. It is found in the lysosome. The protein localises to the secreted. Its function is as follows. Carboxypeptidase that may play an important role in the hydrolysis of circulating peptides. Catalyzes the hydrolysis of dipeptides with unsubstituted terminals into amino acids. May play a role in the liberation of thyroxine hormone from its thyroglobulin (Tg) precursor. The sequence is that of Carboxypeptidase Q (Cpq) from Rattus norvegicus (Rat).